A 331-amino-acid chain; its full sequence is Carbonic anhydrase-related protein 11 (331 aa).

The first 23 residues, 1–23, serve as a signal peptide directing secretion; it reads MGGAARLSAPRALVLWAVLGAAA. Residues 33-306 form the Alpha-carbonic anhydrase domain; it reads DWWSYKDNLQ…LAHRALRGNR (274 aa). N-linked (GlcNAc...) asparagine glycosylation is found at Asn-118, Asn-170, Asn-189, and Asn-263. The segment at 303–331 is disordered; it reads RGNRDPRHPERRCRGPNYRLHVDGAPHGR. A compositionally biased stretch (basic and acidic residues) spans 322-331; it reads LHVDGAPHGR.

This sequence belongs to the alpha-carbonic anhydrase family.

The protein resides in the secreted. Its function is as follows. Does not have a catalytic activity. This Sus scrofa (Pig) protein is Carbonic anhydrase-related protein 11 (CA11).